Here is a 196-residue protein sequence, read N- to C-terminus: Probable malonic semialdehyde reductase RutE (196 aa).

This sequence belongs to the nitroreductase family. HadB/RutE subfamily. FMN serves as cofactor.

The enzyme catalyses 3-hydroxypropanoate + NADP(+) = 3-oxopropanoate + NADPH + H(+). Functionally, may reduce toxic product malonic semialdehyde to 3-hydroxypropionic acid, which is excreted. This is Probable malonic semialdehyde reductase RutE from Escherichia coli O81 (strain ED1a).